Here is a 199-residue protein sequence, read N- to C-terminus: dITP/XTP pyrophosphatase (199 aa).

8-13 serves as a coordination point for substrate; it reads TSNINK. Residue aspartate 68 is the Proton acceptor of the active site. Residue aspartate 68 participates in Mg(2+) binding. Substrate is bound by residues serine 69, 155-158, lysine 177, and 182-183; these read FGYN and HR.

Belongs to the HAM1 NTPase family. As to quaternary structure, homodimer. Requires Mg(2+) as cofactor.

It catalyses the reaction XTP + H2O = XMP + diphosphate + H(+). It carries out the reaction dITP + H2O = dIMP + diphosphate + H(+). The catalysed reaction is ITP + H2O = IMP + diphosphate + H(+). In terms of biological role, pyrophosphatase that catalyzes the hydrolysis of nucleoside triphosphates to their monophosphate derivatives, with a high preference for the non-canonical purine nucleotides XTP (xanthosine triphosphate), dITP (deoxyinosine triphosphate) and ITP. Seems to function as a house-cleaning enzyme that removes non-canonical purine nucleotides from the nucleotide pool, thus preventing their incorporation into DNA/RNA and avoiding chromosomal lesions. This Borrelia recurrentis (strain A1) protein is dITP/XTP pyrophosphatase.